Here is a 312-residue protein sequence, read N- to C-terminus: Acetyl-coenzyme A carboxylase carboxyl transferase subunit alpha (312 aa).

The CoA carboxyltransferase C-terminal domain occupies 36–286 (NLEKEISKTY…ADYVKKSLNE (251 aa)).

Belongs to the AccA family. In terms of assembly, acetyl-CoA carboxylase is a heterohexamer composed of biotin carboxyl carrier protein (AccB), biotin carboxylase (AccC) and two subunits each of ACCase subunit alpha (AccA) and ACCase subunit beta (AccD).

It localises to the cytoplasm. The catalysed reaction is N(6)-carboxybiotinyl-L-lysyl-[protein] + acetyl-CoA = N(6)-biotinyl-L-lysyl-[protein] + malonyl-CoA. It participates in lipid metabolism; malonyl-CoA biosynthesis; malonyl-CoA from acetyl-CoA: step 1/1. Component of the acetyl coenzyme A carboxylase (ACC) complex. First, biotin carboxylase catalyzes the carboxylation of biotin on its carrier protein (BCCP) and then the CO(2) group is transferred by the carboxyltransferase to acetyl-CoA to form malonyl-CoA. The polypeptide is Acetyl-coenzyme A carboxylase carboxyl transferase subunit alpha (Campylobacter jejuni subsp. doylei (strain ATCC BAA-1458 / RM4099 / 269.97)).